The chain runs to 260 residues: Ribonuclease HII (260 aa).

The region spanning 71–259 (RRIAGIDEAG…VREVLKASEQ (189 aa)) is the RNase H type-2 domain. The a divalent metal cation site is built by Asp-77, Glu-78, and Asp-169.

The protein belongs to the RNase HII family. Requires Mn(2+) as cofactor. Mg(2+) serves as cofactor.

The protein resides in the cytoplasm. The enzyme catalyses Endonucleolytic cleavage to 5'-phosphomonoester.. In terms of biological role, endonuclease that specifically degrades the RNA of RNA-DNA hybrids. This is Ribonuclease HII from Geobacillus kaustophilus (strain HTA426).